The sequence spans 276 residues: Dermonecrotic toxin LdSicTox-alphaIB2 (276 aa).

The active site involves His5. Mg(2+) contacts are provided by Glu25 and Asp27. The active-site Nucleophile is the His41. Cystine bridges form between Cys45–Cys51 and Cys47–Cys190. Asp85 is a binding site for Mg(2+). An N-linked (GlcNAc...) asparagine glycan is attached at Asn253.

Belongs to the arthropod phospholipase D family. Class II subfamily. Requires Mg(2+) as cofactor. Expressed by the venom gland.

It is found in the secreted. It carries out the reaction an N-(acyl)-sphingosylphosphocholine = an N-(acyl)-sphingosyl-1,3-cyclic phosphate + choline. The enzyme catalyses an N-(acyl)-sphingosylphosphoethanolamine = an N-(acyl)-sphingosyl-1,3-cyclic phosphate + ethanolamine. It catalyses the reaction a 1-acyl-sn-glycero-3-phosphocholine = a 1-acyl-sn-glycero-2,3-cyclic phosphate + choline. The catalysed reaction is a 1-acyl-sn-glycero-3-phosphoethanolamine = a 1-acyl-sn-glycero-2,3-cyclic phosphate + ethanolamine. In terms of biological role, dermonecrotic toxins cleave the phosphodiester linkage between the phosphate and headgroup of certain phospholipids (sphingolipid and lysolipid substrates), forming an alcohol (often choline) and a cyclic phosphate. This toxin acts on sphingomyelin (SM). It may also act on ceramide phosphoethanolamine (CPE), lysophosphatidylcholine (LPC) and lysophosphatidylethanolamine (LPE), but not on lysophosphatidylserine (LPS), and lysophosphatidylglycerol (LPG). It acts by transphosphatidylation, releasing exclusively cyclic phosphate products as second products. Induces dermonecrosis, hemolysis, increased vascular permeability, edema, inflammatory response, and platelet aggregation. The protein is Dermonecrotic toxin LdSicTox-alphaIB2 of Loxosceles deserta (Desert recluse spider).